The sequence spans 511 residues: N-acetylgalactosamine-6-O-sulfatase (511 aa).

Residue Ser-83 is modified to 3-oxoalanine (Ser).

This sequence belongs to the sulfatase family. The conversion to 3-oxoalanine (also known as C-formylglycine, FGly), of a serine or cysteine residue in prokaryotes and of a cysteine residue in eukaryotes, is critical for catalytic activity.

Functionally, exosulfatase involved in the degradation of the glycosaminoglycans (GAGs) chondroitin sulfate (CS) and dermatan sulfate (DS). Catalyzes the hydrolysis of the 6-sulfate groups of the N-acetyl-D-galactosamine 6-sulfate units. GAG-specific sulfatases play a key role in the persistence of the major human gut symbiont B.thetaiotaomicron in the host gastrointestinal tract. The protein is N-acetylgalactosamine-6-O-sulfatase of Bacteroides thetaiotaomicron (strain ATCC 29148 / DSM 2079 / JCM 5827 / CCUG 10774 / NCTC 10582 / VPI-5482 / E50).